Reading from the N-terminus, the 365-residue chain is tRNA/tmRNA (uracil-C(5))-methyltransferase (365 aa).

5 residues coordinate S-adenosyl-L-methionine: Q189, Y217, N222, E238, and D298. Catalysis depends on C323, which acts as the Nucleophile. The Proton acceptor role is filled by E357.

It belongs to the class I-like SAM-binding methyltransferase superfamily. RNA M5U methyltransferase family. TrmA subfamily.

It catalyses the reaction uridine(54) in tRNA + S-adenosyl-L-methionine = 5-methyluridine(54) in tRNA + S-adenosyl-L-homocysteine + H(+). It carries out the reaction uridine(341) in tmRNA + S-adenosyl-L-methionine = 5-methyluridine(341) in tmRNA + S-adenosyl-L-homocysteine + H(+). Its function is as follows. Dual-specificity methyltransferase that catalyzes the formation of 5-methyluridine at position 54 (m5U54) in all tRNAs, and that of position 341 (m5U341) in tmRNA (transfer-mRNA). The protein is tRNA/tmRNA (uracil-C(5))-methyltransferase of Shewanella amazonensis (strain ATCC BAA-1098 / SB2B).